A 704-amino-acid chain; its full sequence is MSPSAIAEKKQVDNIQEIKDKNQEPAHHEYEHLTNVGVVKQKPIDHRLKDNIKTHYSPHLDGLQEYKRQYQESIENPEKFFSEKARSFMNWFRDFDRVFVPDVDNPTKPSFENNAWFLNGQLNTCYNCVDRHALKTPNKTAIIYEADEPGEGYSMSYKELLEKVCQVAQILKYSMNVKKGDTVAVYMPMIPEALITLLAISRIGAIHSVVFAGFSSNSLRDRINDAGSRVVITADESNRGGKIIETKRIVDDALRETPQVEHVLVYRRTNNPQVNFQAPRDLDWETERKKYKTYFPCEPVDSEHPLFLLYTSGSTGTPKGVQHSTAGYLLGALLTMRYTFDVHQEDVFFTAGDIGWITGHTYCVYGPLLYGCTTLVFEGTPAYPNFSRYWEIIDKHQVTQFYVAPTALRLLKRAGDSFIDGFSLKSLRCLGSVGEPIAAEVWEWYSDKIGKNEIPIVDTYWQTESGSHLVTPLAGGVTPMKPGSASLPFFGIETVILDPTTGEEINDSHAEGVLAIKRPWPSFARTIWKNHDRFLDTYLNPYKGYYFTGDGAARDKDGYIWILGRVDDVVNVSGHRLSTAEIEAAIIEDRMVAECAVVGFNDDLTGQAVAAFVVLKDKSTWASASEEELQDIKKHLILTVRKDIGPFAAPKLIVLVDDLPKTRSGKIMRRILRKILAGESDQLGDVSTLSNPGVVKHLIDSVKL.

CoA contacts are provided by residues 239–242 (RGGK) and Thr-358. ATP-binding positions include 434-436 (GEP), 458-463 (DTYWQT), Asp-550, and Arg-565. Residue Ser-573 coordinates CoA. Residue Arg-576 coordinates ATP. Residue Arg-641 coordinates CoA. A Microbody targeting signal motif is present at residues 702 to 704 (VKL).

Belongs to the ATP-dependent AMP-binding enzyme family.

Its subcellular location is the microsome. The protein localises to the endoplasmic reticulum. The enzyme catalyses acetate + ATP + CoA = acetyl-CoA + AMP + diphosphate. The protein is Acetyl-coenzyme A synthetase 1 (ACS1) of Candida glabrata (strain ATCC 2001 / BCRC 20586 / JCM 3761 / NBRC 0622 / NRRL Y-65 / CBS 138) (Yeast).